Here is a 520-residue protein sequence, read N- to C-terminus: Tubby-related protein 2 (520 aa).

A phosphoserine mark is found at Ser135 and Ser190. The tract at residues 141 to 236 is disordered; it reads EVSVENGSVS…GTNSSAAHNE (96 aa). A compositionally biased stretch (basic and acidic residues) spans 211–223; it reads QKEEDLEKKREAS. Over residues 224 to 233 the composition is skewed to polar residues; it reads ESTGTNSSAA.

Belongs to the TUB family. As to expression, strongly expressed in testis. Also expressed in retina. Expressed in cancer cell lines.

The protein localises to the cytoplasm. It is found in the secreted. This is Tubby-related protein 2 (TULP2) from Homo sapiens (Human).